We begin with the raw amino-acid sequence, 814 residues long: Dimethyl sulfoxide reductase DmsA (814 aa).

A signal peptide (tat-type signal) is located at residues 1-45 (MKTKIPDAVLAAEVSRRGLVKTTAIGGLAMASSALTLPFSRIAHA). A 4Fe-4S Mo/W bis-MGD-type domain is found at 56 to 118 (EKVIWSACTV…SMRRRVYNPD (63 aa)). 4 residues coordinate [4Fe-4S] cluster: Cys-63, Cys-67, Cys-71, and Cys-104. Mo-bis(molybdopterin guanine dinucleotide)-binding positions include 172 to 176 (LGGTM), Ser-205, 244 to 245 (ET), 270 to 271 (ID), 291 to 293 (GTD), 386 to 387 (WG), Arg-390, Asn-488, 512 to 513 (ID), His-701, 707 to 709 (HST), Asn-788, and 804 to 805 (SH).

The protein belongs to the prokaryotic molybdopterin-containing oxidoreductase family. As to quaternary structure, heterotrimeric enzyme composed of a catalytic heterodimer (DmsAB) and a membrane anchor protein (DmsC). Requires [4Fe-4S] cluster as cofactor. Mo-bis(molybdopterin guanine dinucleotide) is required as a cofactor. In terms of processing, exported by the Tat system. The position of the signal peptide cleavage has been experimentally proven. Can also be exported by the Sec system.

Its subcellular location is the cell membrane. The catalysed reaction is dimethyl sulfide + a menaquinone + H2O = dimethyl sulfoxide + a menaquinol. Its activity is regulated as follows. Inhibited by dithionite, sodium hydrogensulfite and tungstate. Its function is as follows. Catalyzes the reduction of dimethyl sulfoxide (DMSO) to dimethyl sulfide (DMS). DMSO reductase serves as the terminal reductase under anaerobic conditions, with DMSO being the terminal electron acceptor. Terminal reductase during anaerobic growth on various sulfoxides and N-oxide compounds. Allows E.coli to grow anaerobically on DMSO as respiratory oxidant. This is Dimethyl sulfoxide reductase DmsA (dmsA) from Escherichia coli (strain K12).